Here is a 171-residue protein sequence, read N- to C-terminus: Translation initiation factor IF-3 (171 aa).

Belongs to the IF-3 family. Monomer.

It is found in the cytoplasm. Functionally, IF-3 binds to the 30S ribosomal subunit and shifts the equilibrium between 70S ribosomes and their 50S and 30S subunits in favor of the free subunits, thus enhancing the availability of 30S subunits on which protein synthesis initiation begins. The chain is Translation initiation factor IF-3 from Thermus thermophilus (strain ATCC BAA-163 / DSM 7039 / HB27).